Here is a 229-residue protein sequence, read N- to C-terminus: Ribose-5-phosphate isomerase A (229 aa).

Residues 28 to 31 (TGST), 85 to 88 (DGAD), and 98 to 101 (KGRG) each bind substrate. Glu-107 (proton acceptor) is an active-site residue. Lys-125 contacts substrate.

Belongs to the ribose 5-phosphate isomerase family. As to quaternary structure, homodimer.

It catalyses the reaction aldehydo-D-ribose 5-phosphate = D-ribulose 5-phosphate. Its pathway is carbohydrate degradation; pentose phosphate pathway; D-ribose 5-phosphate from D-ribulose 5-phosphate (non-oxidative stage): step 1/1. In terms of biological role, catalyzes the reversible conversion of ribose-5-phosphate to ribulose 5-phosphate. The chain is Ribose-5-phosphate isomerase A from Pyrococcus abyssi (strain GE5 / Orsay).